A 468-amino-acid chain; its full sequence is ATP synthase subunit beta (468 aa).

Residue 155 to 162 (GGAGVGKT) coordinates ATP.

It belongs to the ATPase alpha/beta chains family. As to quaternary structure, F-type ATPases have 2 components, CF(1) - the catalytic core - and CF(0) - the membrane proton channel. CF(1) has five subunits: alpha(3), beta(3), gamma(1), delta(1), epsilon(1). CF(0) has three main subunits: a(1), b(2) and c(9-12). The alpha and beta chains form an alternating ring which encloses part of the gamma chain. CF(1) is attached to CF(0) by a central stalk formed by the gamma and epsilon chains, while a peripheral stalk is formed by the delta and b chains.

Its subcellular location is the cell membrane. The catalysed reaction is ATP + H2O + 4 H(+)(in) = ADP + phosphate + 5 H(+)(out). In terms of biological role, produces ATP from ADP in the presence of a proton gradient across the membrane. The catalytic sites are hosted primarily by the beta subunits. The chain is ATP synthase subunit beta from Streptococcus equi subsp. zooepidemicus (strain H70).